The sequence spans 98 residues: UPF0251 protein Sbal_3699 (98 aa).

The protein belongs to the UPF0251 family.

The protein is UPF0251 protein Sbal_3699 of Shewanella baltica (strain OS155 / ATCC BAA-1091).